The primary structure comprises 215 residues: Autophagy-related protein 101 (215 aa).

Positions 124–147 (PVGKSHHSKLVMDPGEASEERSSR) are disordered.

This sequence belongs to the ATG101 family. Interacts with ATG11 and ATG13A.

Its subcellular location is the cytoplasmic vesicle. It is found in the autophagosome. Accessory protein involved in autophagy. Acts as a scaffold protein of the ATG1-ATG13 complex for faithful delivery of autophagic vesicles to the vacuole. Required for selective mitophagy. This is Autophagy-related protein 101 from Arabidopsis thaliana (Mouse-ear cress).